A 377-amino-acid polypeptide reads, in one-letter code: MQTLLDTAHCRLTLYRYPRQSQDPLQAWDAADEYLINTLAETPLEQAGPVIIMNDGFGALAAFLHPHAPVCVSDSYISERATLANLAENELDPHAIRLQDALAPLPLAPALVVIKVSKYQALLEQQLLALRAVVTPATRVIAAGKAKDIHSSTLALFEKYLGPTRTSLAWKKARLIHCEPQAMQPELANPYPTVWPLEGTGMLIHNHANVFSRTSLDIGARFMLDNLPVHSARKVIDLGCGNGVLGLALLAKDPEVEVTFIDESHMAVASARLNVEHNLPDALPRARFMVNNCLDDVAVGAADRILCNPPFHQLQAITDHIAWQMFSDAHRVLPQGGELWIVGNRHLDYHNKLKRLFANAQVVASNSKFVILKAIKR.

This sequence belongs to the methyltransferase superfamily. RlmG family.

The protein localises to the cytoplasm. It catalyses the reaction guanosine(1835) in 23S rRNA + S-adenosyl-L-methionine = N(2)-methylguanosine(1835) in 23S rRNA + S-adenosyl-L-homocysteine + H(+). Specifically methylates the guanine in position 1835 (m2G1835) of 23S rRNA. This Aeromonas salmonicida (strain A449) protein is Ribosomal RNA large subunit methyltransferase G.